A 367-amino-acid polypeptide reads, in one-letter code: uncharacterized protein (367 aa).

The chain crosses the membrane as a helical span at residues 8–28; that stretch reads VLIGTFVLAAILAVFGFIYWL.

Its subcellular location is the membrane. This is an uncharacterized protein from Bradyrhizobium diazoefficiens (strain JCM 10833 / BCRC 13528 / IAM 13628 / NBRC 14792 / USDA 110).